The sequence spans 318 residues: Homoserine kinase (318 aa).

97–107 (PIGSGLGSSAC) contributes to the ATP binding site.

It belongs to the GHMP kinase family. Homoserine kinase subfamily.

It is found in the cytoplasm. The catalysed reaction is L-homoserine + ATP = O-phospho-L-homoserine + ADP + H(+). It participates in amino-acid biosynthesis; L-threonine biosynthesis; L-threonine from L-aspartate: step 4/5. Functionally, catalyzes the ATP-dependent phosphorylation of L-homoserine to L-homoserine phosphate. This chain is Homoserine kinase, found in Vibrio atlanticus (strain LGP32) (Vibrio splendidus (strain Mel32)).